Reading from the N-terminus, the 489-residue chain is Glutamyl-tRNA(Gln) amidotransferase subunit A (489 aa).

Catalysis depends on charge relay system residues lysine 77 and serine 152. The Acyl-ester intermediate role is filled by serine 176.

It belongs to the amidase family. GatA subfamily. In terms of assembly, heterotrimer of A, B and C subunits.

The enzyme catalyses L-glutamyl-tRNA(Gln) + L-glutamine + ATP + H2O = L-glutaminyl-tRNA(Gln) + L-glutamate + ADP + phosphate + H(+). Its function is as follows. Allows the formation of correctly charged Gln-tRNA(Gln) through the transamidation of misacylated Glu-tRNA(Gln) in organisms which lack glutaminyl-tRNA synthetase. The reaction takes place in the presence of glutamine and ATP through an activated gamma-phospho-Glu-tRNA(Gln). This chain is Glutamyl-tRNA(Gln) amidotransferase subunit A, found in Protochlamydia amoebophila (strain UWE25).